A 594-amino-acid polypeptide reads, in one-letter code: Apolipoprotein N-acyltransferase (594 aa).

Positions 1–29 (MIPAVTDDDPLEDPLDDDVAPGLDDAEPE) are enriched in acidic residues. A disordered region spans residues 1 to 48 (MIPAVTDDDPLEDPLDDDVAPGLDDAEPEPEPRDEHDEPSRPATGSRI). Topologically, residues 1–67 (MIPAVTDDDP…RFGKGVLDRC (67 aa)) are cytoplasmic. Residues 30 to 40 (PEPRDEHDEPS) are compositionally biased toward basic and acidic residues. A helical transmembrane segment spans residues 68-87 (APLSAAIGGGLALWLSFPPI). Topologically, residues 88 to 116 (GWWFTAFPGLALLGWVLTRTATTKAGGFG) are extracellular. Residues 117–134 (YGVLFGLAFYVPLLPWIS) traverse the membrane as a helical segment. Over 135-138 (GLVG) the chain is Cytoplasmic. A helical membrane pass occupies residues 139 to 160 (AVPWLALAFAESLFCGLFGLGA). At 161-221 (VVVVRLPGWP…IGGAPLVSFA (61 aa)) the chain is on the extracellular side. Residues 222–239 (VALIGFSLTLLTAQIVWW) traverse the membrane as a helical segment. At 240 to 251 (WRHGHKPGVPAP) the chain is on the cytoplasmic side. A helical transmembrane segment spans residues 252–269 (AVMLPGVAIAASLLVTAL). Over 270-554 (VWPQVRQSGT…TDLTPATKWG (285 aa)) the chain is Extracellular. A CN hydrolase domain is found at 287-543 (VTVAAVQGNV…PAYLDNQIRL (257 aa)). The Proton acceptor role is filled by Glu-340. Lys-405 is a catalytic residue. Cys-455 (nucleophile) is an active-site residue. The helical transmembrane segment at 555-572 (PIVQAVLVIAGVAVLLIA) threads the bilayer. The Cytoplasmic segment spans residues 573 to 594 (ILHNGRFAPRMLRRRSATTVKR).

The protein belongs to the CN hydrolase family. Apolipoprotein N-acyltransferase subfamily. As to quaternary structure, interacts with Ppm1 (AC A0QZ12) upon coexpression in E.coli, which increases the PPM synthase activity of Ppm1.

The protein resides in the cell membrane. The enzyme catalyses N-terminal S-1,2-diacyl-sn-glyceryl-L-cysteinyl-[lipoprotein] + a glycerophospholipid = N-acyl-S-1,2-diacyl-sn-glyceryl-L-cysteinyl-[lipoprotein] + a 2-acyl-sn-glycero-3-phospholipid + H(+). It participates in protein modification; lipoprotein biosynthesis (N-acyl transfer). Its function is as follows. Catalyzes the phospholipid dependent N-acylation of the N-terminal cysteine of apolipoprotein, the last step in lipoprotein maturation. Can transfer a number of fatty acids (C16 and C19, palmitic and probably tuberculostearic acids respectively are shown). Enhances the polyprenol monophosphomannose (PPM) synthase activity of Ppm1 (AC A0QZ12) without itself having PPM synthase catalytic activity. This Mycolicibacterium smegmatis (strain ATCC 700084 / mc(2)155) (Mycobacterium smegmatis) protein is Apolipoprotein N-acyltransferase.